We begin with the raw amino-acid sequence, 641 residues long: Methylenetetrahydrofolate reductase 2 (641 aa).

Catalysis depends on Glu20, which acts as the Proton donor/acceptor. NAD(+) is bound by residues 20-25 (EYFPPK) and 52-53 (TW). FAD-binding positions include 52–53 (TW), His81, 111–113 (RGD), Tyr153, Asp172, and Lys179. Asp113 contacts substrate. Gln190 is a binding site for substrate.

It belongs to the methylenetetrahydrofolate reductase family. FAD is required as a cofactor.

It carries out the reaction (6S)-5-methyl-5,6,7,8-tetrahydrofolate + NADP(+) = (6R)-5,10-methylene-5,6,7,8-tetrahydrofolate + NADPH + H(+). It functions in the pathway one-carbon metabolism; tetrahydrofolate interconversion. Major methylenetetrahydrofolate reductase required to generate the methyl groups necessary for methionine synthetase to convert homocysteine to methionine. Performs 15 to 20 percent of the total methylenetetrahydrofolate reductase activity of the cells. The polypeptide is Methylenetetrahydrofolate reductase 2 (met11) (Schizosaccharomyces pombe (strain 972 / ATCC 24843) (Fission yeast)).